Reading from the N-terminus, the 396-residue chain is Maltose/maltodextrin-binding periplasmic protein (396 aa).

The signal sequence occupies residues 1 to 26 (MKIKTGVGILALSALTTMMISAPALA).

It belongs to the bacterial solute-binding protein 1 family. In terms of assembly, the complex is composed of two ATP-binding proteins (MalK), two transmembrane proteins (MalG and MalF) and a solute-binding protein (MalE).

Its subcellular location is the periplasm. Functionally, part of the ABC transporter complex MalEFGK involved in maltose/maltodextrin import. Binds maltose and higher maltodextrins. The chain is Maltose/maltodextrin-binding periplasmic protein (malE) from Salmonella typhimurium (strain LT2 / SGSC1412 / ATCC 700720).